The chain runs to 318 residues: tRNA-modifying protein YgfZ (318 aa).

2 residues coordinate folate: Trp-28 and Trp-182.

This sequence belongs to the tRNA-modifying YgfZ family.

Its subcellular location is the cytoplasm. Functionally, folate-binding protein involved in regulating the level of ATP-DnaA and in the modification of some tRNAs. It is probably a key factor in regulatory networks that act via tRNA modification, such as initiation of chromosomal replication. The chain is tRNA-modifying protein YgfZ from Aliivibrio fischeri (strain ATCC 700601 / ES114) (Vibrio fischeri).